We begin with the raw amino-acid sequence, 370 residues long: MTNMNVDATQLTTKPSQDGFSMPAEWAQQQAVWMIWPYRPDNWRSAGAYAQATFAKVADAIGAVTPVYMGVPKAFLAQAKTVMPAHVTLVEIDSNDCWARDTGPTVVVNAKGECRGVDWGFNAWGGDNGGLYSPWDKDELVAQKMLTQHGFDRYQAPLILEGGSIHVDGEGTCMTTAECLLNSNRNPDLTREQIEALLAEYLNVKQFIWLPDGVYMDETDGHIDNLCCFARPGEVVLHWTDDQSDPQYPRSKAALDILQNTVDAQGRKLTVHLIPQPGPLYCTEEEAQGVAEGTGVPRTAGERLAGSYANFLITNNRIVFPLLDPVTDDIAAQKLQEIFPEYEIVGVPAREILLGGGNIHCITQQIPSGK.

Over residues 1–19 (MTNMNVDATQLTTKPSQDG) the composition is skewed to polar residues. The segment at 1–20 (MTNMNVDATQLTTKPSQDGF) is disordered. Cys-361 serves as the catalytic Amidino-cysteine intermediate.

The protein belongs to the agmatine deiminase family.

It carries out the reaction agmatine + H2O = N-carbamoylputrescine + NH4(+). This chain is Putative agmatine deiminase, found in Shewanella frigidimarina (strain NCIMB 400).